Here is a 230-residue protein sequence, read N- to C-terminus: MTTNAGPLHPYWPQHLRLDNFVPNDRPTWHILAGLFSVTGVLVVTTWLLSGRAAVVPLGTWRRLSLCWFAVCGFIHLVIEGWFVLYYEDLLGDQAFLSQLWKEYAKGDSRYILGDNFTVCMETITACLWGPLSLWVVIAFLRQHPLRFILQLVVSVGQIYGDVLYFLTEHRDGFQHGELGHPLYFWFYFVFMNALWLVLPGVLVLDAVKHLTHAQSTLDAKATKAKSKKN.

Thr-2 carries the N-acetylthreonine modification. The next 4 membrane-spanning stretches (helical) occupy residues 29–49 (WHIL…TWLL), 66–86 (LCWF…FVLY), 121–141 (METI…IAFL), and 185–205 (FWFY…VLVL). The region spanning 61–204 (WRRLSLCWFA…LWLVLPGVLV (144 aa)) is the EXPERA domain.

This sequence belongs to the EBP family.

Its subcellular location is the endoplasmic reticulum membrane. The protein localises to the nucleus envelope. The protein resides in the cytoplasmic vesicle. The enzyme catalyses lathosterol = 5alpha-cholest-8-en-3beta-ol. It carries out the reaction zymosterol = 5alpha-cholesta-7,24-dien-3beta-ol. It catalyses the reaction 5,6alpha-epoxy-5alpha-cholestan-3beta-ol + H2O = 5alpha-cholestane-3beta,5,6beta-triol. The catalysed reaction is 5,6beta-epoxy-5beta-cholestan-3beta-ol + H2O = 5alpha-cholestane-3beta,5,6beta-triol. It participates in steroid biosynthesis; cholesterol biosynthesis. With respect to regulation, cholestenol Delta-isomerase and cholesterol-5,6-epoxide hydrolase (ChEH) activities are inhibited by tamoxifen and the selective AEBS ligand (4-benzyl-phenoxy)-ethyl-N-pyrrolidine (PBPE). ChEH activity is inhibited by oleic acid. Functionally, isomerase that catalyzes the conversion of Delta(8)-sterols to their corresponding Delta(7)-isomers a catalytic step in the postlanosterol biosynthesis of cholesterol. Component of the microsomal antiestrogen binding site (AEBS), a multiproteic complex at the ER membrane that consists of an association between EBP and 7-dehydrocholesterol reductase/DHCR7. This complex is responsible for cholesterol-5,6-epoxide hydrolase (ChEH) activity, which consists in the hydration of cholesterol-5,6-epoxides (5,6-EC) into cholestane-3beta,5alpha,6beta-triol (CT). The precise role of each component of this complex has not been described yet. This Homo sapiens (Human) protein is 3-beta-hydroxysteroid-Delta(8),Delta(7)-isomerase.